The following is a 246-amino-acid chain: Metallo-beta-lactamase type 2 (246 aa).

The signal sequence occupies residues 1–20 (MKKLFVLCVCFFCSITAAGA). Residues H95, H97, D99, H157, and C176 each contribute to the Zn(2+) site. Position 99 (D99) interacts with a beta-lactam. A beta-lactam contacts are provided by K179 and N185. Residue H215 coordinates Zn(2+).

The protein belongs to the metallo-beta-lactamase superfamily. Class-B beta-lactamase family. As to quaternary structure, monomer. Requires Zn(2+) as cofactor.

It is found in the periplasm. It carries out the reaction a beta-lactam + H2O = a substituted beta-amino acid. Its function is as follows. Confers resistance to the different beta-lactam antibiotics (penicillin, cephalosporin and carbapenem) via the hydrolysis of the beta-lactam ring. Exhibits higher catalytic efficiency toward ticarcillin and piperacillin than blaIMP-1. Exhibits catalytic activity for carbapenem compounds, but has a preference for imipenem and ertapenem over meropenem. Has high efficiency for the hydrolysis of cefuroxime. Exhibits hydrolysis of all cephalosporins tested. Exhibits no hydrolysis of temocillin, the 6-alpha-methoxy semisynthetic derivative of ticarcillin. This is Metallo-beta-lactamase type 2 from Pseudomonas aeruginosa.